The sequence spans 426 residues: tRNA(Met) cytidine acetate ligase (426 aa).

Residues 7–20 (VVEY…HLFH), Gly-101, Asn-168, and Arg-193 contribute to the ATP site.

The protein belongs to the TmcAL family.

It localises to the cytoplasm. The catalysed reaction is cytidine(34) in elongator tRNA(Met) + acetate + ATP = N(4)-acetylcytidine(34) in elongator tRNA(Met) + AMP + diphosphate. Its function is as follows. Catalyzes the formation of N(4)-acetylcytidine (ac(4)C) at the wobble position of elongator tRNA(Met), using acetate and ATP as substrates. First activates an acetate ion to form acetyladenylate (Ac-AMP) and then transfers the acetyl group to tRNA to form ac(4)C34. This Kosmotoga olearia (strain ATCC BAA-1733 / DSM 21960 / TBF 19.5.1) protein is tRNA(Met) cytidine acetate ligase.